A 261-amino-acid polypeptide reads, in one-letter code: Triosephosphate isomerase (261 aa).

10-12 (NWK) contacts substrate. Residue histidine 100 is the Electrophile of the active site. Catalysis depends on glutamate 172, which acts as the Proton acceptor. Substrate contacts are provided by residues glycine 178, serine 218, and 239 to 240 (GG).

It belongs to the triosephosphate isomerase family. In terms of assembly, homodimer.

The protein resides in the cytoplasm. The enzyme catalyses D-glyceraldehyde 3-phosphate = dihydroxyacetone phosphate. The protein operates within carbohydrate biosynthesis; gluconeogenesis. It participates in carbohydrate degradation; glycolysis; D-glyceraldehyde 3-phosphate from glycerone phosphate: step 1/1. Functionally, involved in the gluconeogenesis. Catalyzes stereospecifically the conversion of dihydroxyacetone phosphate (DHAP) to D-glyceraldehyde-3-phosphate (G3P). In Mycobacterium sp. (strain JLS), this protein is Triosephosphate isomerase.